The chain runs to 123 residues: Large ribosomal subunit protein bL21 (123 aa).

It belongs to the bacterial ribosomal protein bL21 family. In terms of assembly, part of the 50S ribosomal subunit. Contacts protein L20.

In terms of biological role, this protein binds to 23S rRNA in the presence of protein L20. The polypeptide is Large ribosomal subunit protein bL21 (Sinorhizobium fredii (strain NBRC 101917 / NGR234)).